The chain runs to 273 residues: Neuferricin (273 aa).

A signal peptide spans 1 to 22 (MLGYLAAAALCLAAVLLMRLDH). Residues 44 to 143 (GRLMSKEELS…QNYITIGKLT (100 aa)) form the Cytochrome b5 heme-binding domain.

Belongs to the cytochrome b5 family. MAPR subfamily.

The protein localises to the secreted. In terms of biological role, heme-binding protein which promotes neuronal but not astrocyte differentiation. The sequence is that of Neuferricin (cyb5d2) from Xenopus tropicalis (Western clawed frog).